The primary structure comprises 489 residues: Endoglucanase 4 (489 aa).

Positions 1–25 (MAGKSFMTPAIMLAMLLLISPETYA) are cleaved as a signal peptide. The active-site Nucleophile is aspartate 81. The active site involves histidine 409. Residue asparagine 453 is glycosylated (N-linked (GlcNAc...) asparagine). Active-site residues include aspartate 460 and glutamate 469.

The protein belongs to the glycosyl hydrolase 9 (cellulase E) family.

Its subcellular location is the secreted. The catalysed reaction is Endohydrolysis of (1-&gt;4)-beta-D-glucosidic linkages in cellulose, lichenin and cereal beta-D-glucans.. In Arabidopsis thaliana (Mouse-ear cress), this protein is Endoglucanase 4.